The following is a 286-amino-acid chain: Phosphatidylglycerol--prolipoprotein diacylglyceryl transferase (286 aa).

The next 7 helical transmembrane spans lie at 24-44 (IGPL…LFAW), 72-92 (FIVW…VLFY), 104-124 (IFAV…VILA), 140-160 (FDVV…ANFI), 190-210 (LYEA…LTHS), 218-238 (RFVG…VEFF), and 253-273 (WLTM…WAMA). A 1,2-diacyl-sn-glycero-3-phospho-(1'-sn-glycerol) is bound at residue arginine 155.

The protein belongs to the Lgt family.

It is found in the cell inner membrane. The catalysed reaction is L-cysteinyl-[prolipoprotein] + a 1,2-diacyl-sn-glycero-3-phospho-(1'-sn-glycerol) = an S-1,2-diacyl-sn-glyceryl-L-cysteinyl-[prolipoprotein] + sn-glycerol 1-phosphate + H(+). The protein operates within protein modification; lipoprotein biosynthesis (diacylglyceryl transfer). Catalyzes the transfer of the diacylglyceryl group from phosphatidylglycerol to the sulfhydryl group of the N-terminal cysteine of a prolipoprotein, the first step in the formation of mature lipoproteins. This chain is Phosphatidylglycerol--prolipoprotein diacylglyceryl transferase, found in Mesorhizobium japonicum (strain LMG 29417 / CECT 9101 / MAFF 303099) (Mesorhizobium loti (strain MAFF 303099)).